A 545-amino-acid polypeptide reads, in one-letter code: Chromosomal replication initiator protein DnaA (545 aa).

Residues M1 to P72 form a domain I, interacts with DnaA modulators region. A domain II region spans residues P72–S208. The span at A90–G105 shows a compositional bias: low complexity. Disordered stretches follow at residues A90–G112 and A181–M204. The segment covering P189–T201 has biased composition (polar residues). Positions K209 to S425 are domain III, AAA+ region. ATP contacts are provided by G253, G255, K256, and T257. A domain IV, binds dsDNA region spans residues K426 to G545.

It belongs to the DnaA family. In terms of assembly, oligomerizes as a right-handed, spiral filament on DNA at oriC.

The protein localises to the cytoplasm. In terms of biological role, plays an essential role in the initiation and regulation of chromosomal replication. ATP-DnaA binds to the origin of replication (oriC) to initiate formation of the DNA replication initiation complex once per cell cycle. Binds the DnaA box (a 9 base pair repeat at the origin) and separates the double-stranded (ds)DNA. Forms a right-handed helical filament on oriC DNA; dsDNA binds to the exterior of the filament while single-stranded (ss)DNA is stabiized in the filament's interior. The ATP-DnaA-oriC complex binds and stabilizes one strand of the AT-rich DNA unwinding element (DUE), permitting loading of DNA polymerase. After initiation quickly degrades to an ADP-DnaA complex that is not apt for DNA replication. Binds acidic phospholipids. The polypeptide is Chromosomal replication initiator protein DnaA (Paraburkholderia phytofirmans (strain DSM 17436 / LMG 22146 / PsJN) (Burkholderia phytofirmans)).